A 197-amino-acid chain; its full sequence is Imidazoleglycerol-phosphate dehydratase (197 aa).

It belongs to the imidazoleglycerol-phosphate dehydratase family.

The protein localises to the cytoplasm. It carries out the reaction D-erythro-1-(imidazol-4-yl)glycerol 3-phosphate = 3-(imidazol-4-yl)-2-oxopropyl phosphate + H2O. It functions in the pathway amino-acid biosynthesis; L-histidine biosynthesis; L-histidine from 5-phospho-alpha-D-ribose 1-diphosphate: step 6/9. This is Imidazoleglycerol-phosphate dehydratase from Novosphingobium aromaticivorans (strain ATCC 700278 / DSM 12444 / CCUG 56034 / CIP 105152 / NBRC 16084 / F199).